We begin with the raw amino-acid sequence, 550 residues long: Chaperonin GroEL (550 aa).

Residues 30 to 33 (TLGP), lysine 51, 87 to 91 (DGTTT), glycine 415, and aspartate 495 contribute to the ATP site.

This sequence belongs to the chaperonin (HSP60) family. As to quaternary structure, forms a cylinder of 14 subunits composed of two heptameric rings stacked back-to-back. Interacts with the co-chaperonin GroES.

It localises to the cytoplasm. The catalysed reaction is ATP + H2O + a folded polypeptide = ADP + phosphate + an unfolded polypeptide.. Together with its co-chaperonin GroES, plays an essential role in assisting protein folding. The GroEL-GroES system forms a nano-cage that allows encapsulation of the non-native substrate proteins and provides a physical environment optimized to promote and accelerate protein folding. The sequence is that of Chaperonin GroEL from Shewanella woodyi (strain ATCC 51908 / MS32).